Consider the following 435-residue polypeptide: 5-hydroxybenzimidazole synthase (435 aa).

Substrate is bound by residues M95, Y124, H163, 186–188 (SKG), 227–230 (NGLR), and E266. H270 is a binding site for Zn(2+). Y293 is a substrate binding site. Zn(2+) is bound at residue H334. Residues C410, C413, and C417 each contribute to the [4Fe-4S] cluster site.

This sequence belongs to the ThiC family. 5-hydroxybenzimidazole synthase subfamily. In terms of assembly, homodimer. [4Fe-4S] cluster serves as cofactor.

It catalyses the reaction 5-amino-1-(5-phospho-beta-D-ribosyl)imidazole + AH2 + S-adenosyl-L-methionine = 5-hydroxybenzimidazole + 5'-deoxyadenosine + formate + L-methionine + A + NH4(+) + phosphate + 2 H(+). In terms of biological role, catalyzes the conversion of aminoimidazole ribotide (AIR) to 5-hydroxybenzimidazole (5-HBI) in a radical S-adenosyl-L-methionine (SAM)-dependent reaction. Is thus involved in the anaerobic biosynthesis of the benzimidazole lower axial ligand of the cobamide produced by G.metallireducens. This Geobacter metallireducens (strain ATCC 53774 / DSM 7210 / GS-15) protein is 5-hydroxybenzimidazole synthase.